We begin with the raw amino-acid sequence, 303 residues long: MIKQRTLKNIIRATGVGLHSGEKVYLTLKPAPVNTGIVFCRADLDPVVQIPARAENVGDTTLSTTLVNGDVKVDTVEHLLSAMAGLGIDNAYVELSASEVPIMDGSAGPFVFLIQSAGLEEQDAPKKFIRILREVTVEEGGKRATFVPFEGFKVSFEIDFDHPVFRDRTQSASVDFSSTSFVKEVSRARTFGFMSDIEYLRKHNLALGGSVENAIVVDKDGVLNEDGLRYEDEFVKHKILDAIGDLYLLGNSLIGEFRGFKSGHALNNRLLRTLIEQKDAWEVVTFEDASTAPISYMRPVAAV.

His78, His237, and Asp241 together coordinate Zn(2+). His264 acts as the Proton donor in catalysis.

It belongs to the LpxC family. Requires Zn(2+) as cofactor.

The enzyme catalyses a UDP-3-O-[(3R)-3-hydroxyacyl]-N-acetyl-alpha-D-glucosamine + H2O = a UDP-3-O-[(3R)-3-hydroxyacyl]-alpha-D-glucosamine + acetate. Its pathway is glycolipid biosynthesis; lipid IV(A) biosynthesis; lipid IV(A) from (3R)-3-hydroxytetradecanoyl-[acyl-carrier-protein] and UDP-N-acetyl-alpha-D-glucosamine: step 2/6. Its function is as follows. Catalyzes the hydrolysis of UDP-3-O-myristoyl-N-acetylglucosamine to form UDP-3-O-myristoylglucosamine and acetate, the committed step in lipid A biosynthesis. This Pseudomonas savastanoi pv. phaseolicola (strain 1448A / Race 6) (Pseudomonas syringae pv. phaseolicola (strain 1448A / Race 6)) protein is UDP-3-O-acyl-N-acetylglucosamine deacetylase.